A 198-amino-acid polypeptide reads, in one-letter code: NAD(P)H dehydrogenase (quinone) (198 aa).

The Flavodoxin-like domain occupies 4-189 (VLVLYYSMYG…SIARYQGEYV (186 aa)). Residues 10-15 (SMYGHI) and 78-80 (TRF) contribute to the FMN site. Tyr12 lines the NAD(+) pocket. Trp98 contacts substrate. FMN contacts are provided by residues 113 to 118 (STGTGG) and His133.

Belongs to the WrbA family. The cofactor is FMN.

The catalysed reaction is a quinone + NADH + H(+) = a quinol + NAD(+). It catalyses the reaction a quinone + NADPH + H(+) = a quinol + NADP(+). In Escherichia coli O157:H7, this protein is NAD(P)H dehydrogenase (quinone).